The following is a 380-amino-acid chain: Mitogen-activated protein kinase 3 (380 aa).

Position 2 is an N-acetylalanine (Ala-2). One can recognise a Protein kinase domain in the interval 43-331; the sequence is YTQLQYIGEG…VEEALAHPYL (289 aa). ATP is bound by residues 49 to 57 and Lys-72; that span reads IGEGAYGMV. Asp-167 (proton acceptor) is an active-site residue. Thr-199 is modified (phosphothreonine). At Thr-203 the chain carries Phosphothreonine; by MAP2K1 and MAP2K2. The TXY motif lies at 203–205; that stretch reads TEY. Tyr-205 is subject to Phosphotyrosine; by MAP2K1 and MAP2K2. The residue at position 208 (Thr-208) is a Phosphothreonine; by autocatalysis.

It belongs to the protein kinase superfamily. CMGC Ser/Thr protein kinase family. MAP kinase subfamily. Binds both upstream activators and downstream substrates in multimolecular complexes. Found in a complex with at least BRAF, HRAS, MAP2K1/MEK1, MAPK3 and RGS14. Interacts with TPR. Interacts with ADAM15, ARRB2, CANX, DAPK1 (via death domain), HSF4, IER3, MAP2K1/MEK1, NISCH, and SGK1. Interacts with MORG1. Interacts with PEA15. Interacts with isoform 1 of MKNK2 and this binding prevents from dephosphorylation and inactivation. Interacts with CDKN2AIP. Interacts with HSF1 (via D domain and preferentially with hyperphosphorylated form); this interaction occurs upon heat shock. Interacts with CAVIN4. Interacts with GIT1; this interaction is necessary for MAPK3 localization to focal adhesions. Interacts with ZNF263. Interacts with EBF4. It depends on Mg(2+) as a cofactor. In terms of processing, dually phosphorylated on Thr-203 and Tyr-205, which activates the enzyme. Ligand-activated ALK induces tyrosine phosphorylation. Dephosphorylated by PTPRJ at Tyr-205. Autophosphorylated on threonine and tyrosine residues in vitro. Phosphorylated upon FLT3 and KIT signaling. Ubiquitinated by TRIM15 via 'Lys-63'-linked ubiquitination; leading to activation. Deubiquitinated by CYLD.

The protein localises to the cytoplasm. Its subcellular location is the nucleus. It is found in the membrane. It localises to the caveola. The protein resides in the cell junction. The protein localises to the focal adhesion. It catalyses the reaction L-seryl-[protein] + ATP = O-phospho-L-seryl-[protein] + ADP + H(+). The enzyme catalyses L-threonyl-[protein] + ATP = O-phospho-L-threonyl-[protein] + ADP + H(+). Phosphorylated by MAP2K1/MEK1 and MAP2K2/MEK2 on Thr-203 and Tyr-205 in response to external stimuli like insulin or NGF. Both phosphorylations are required for activity. This phosphorylation causes dramatic conformational changes, which enable full activation and interaction of MAPK1/ERK2 with its substrates. Dephosphorylated and inactivated by DUSP3, DUSP6 and DUSP9. Serine/threonine kinase which acts as an essential component of the MAP kinase signal transduction pathway. MAPK1/ERK2 and MAPK3/ERK1 are the 2 MAPKs which play an important role in the MAPK/ERK cascade. They participate also in a signaling cascade initiated by activated KIT and KITLG/SCF. Depending on the cellular context, the MAPK/ERK cascade mediates diverse biological functions such as cell growth, adhesion, survival and differentiation through the regulation of transcription, translation, cytoskeletal rearrangements. The MAPK/ERK cascade also plays a role in initiation and regulation of meiosis, mitosis, and postmitotic functions in differentiated cells by phosphorylating a number of transcription factors. About 160 substrates have already been discovered for ERKs. Many of these substrates are localized in the nucleus, and seem to participate in the regulation of transcription upon stimulation. However, other substrates are found in the cytosol as well as in other cellular organelles, and those are responsible for processes such as translation, mitosis and apoptosis. Moreover, the MAPK/ERK cascade is also involved in the regulation of the endosomal dynamics, including lysosome processing and endosome cycling through the perinuclear recycling compartment (PNRC); as well as in the fragmentation of the Golgi apparatus during mitosis. The substrates include transcription factors (such as ATF2, BCL6, ELK1, ERF, FOS, HSF4 or SPZ1), cytoskeletal elements (such as CANX, CTTN, GJA1, MAP2, MAPT, PXN, SORBS3 or STMN1), regulators of apoptosis (such as BAD, BTG2, CASP9, DAPK1, IER3, MCL1 or PPARG), regulators of translation (such as EIF4EBP1) and a variety of other signaling-related molecules (like ARHGEF2, DEPTOR, FRS2 or GRB10). Protein kinases (such as RAF1, RPS6KA1/RSK1, RPS6KA3/RSK2, RPS6KA2/RSK3, RPS6KA6/RSK4, SYK, MKNK1/MNK1, MKNK2/MNK2, RPS6KA5/MSK1, RPS6KA4/MSK2, MAPKAPK3 or MAPKAPK5) and phosphatases (such as DUSP1, DUSP4, DUSP6 or DUSP16) are other substrates which enable the propagation the MAPK/ERK signal to additional cytosolic and nuclear targets, thereby extending the specificity of the cascade. This chain is Mitogen-activated protein kinase 3 (Mapk3), found in Mus musculus (Mouse).